The sequence spans 230 residues: Cytochrome c oxidase subunit 2 (230 aa).

Topologically, residues 1 to 14 (MAHPTQLGFQDAAS) are mitochondrial intermembrane. Residues 15 to 45 (PVMEELLHFHDHALMIVFLISALVLYVIITT) traverse the membrane as a helical segment. Residues 46–59 (VSTKLTNMYILDSQ) lie on the Mitochondrial matrix side of the membrane. A helical transmembrane segment spans residues 60-87 (EIEIVWTVLPALILILIALPSLRILYLM). Topologically, residues 88 to 230 (DEINDPHLTI…NWSTLMLKDA (143 aa)) are mitochondrial intermembrane. Cu cation contacts are provided by His-161, Cys-196, Glu-198, Cys-200, His-204, and Met-207. Glu-198 is a Mg(2+) binding site.

The protein belongs to the cytochrome c oxidase subunit 2 family. In terms of assembly, component of the cytochrome c oxidase (complex IV, CIV), a multisubunit enzyme composed of 14 subunits. The complex is composed of a catalytic core of 3 subunits MT-CO1, MT-CO2 and MT-CO3, encoded in the mitochondrial DNA, and 11 supernumerary subunits COX4I, COX5A, COX5B, COX6A, COX6B, COX6C, COX7A, COX7B, COX7C, COX8 and NDUFA4, which are encoded in the nuclear genome. The complex exists as a monomer or a dimer and forms supercomplexes (SCs) in the inner mitochondrial membrane with NADH-ubiquinone oxidoreductase (complex I, CI) and ubiquinol-cytochrome c oxidoreductase (cytochrome b-c1 complex, complex III, CIII), resulting in different assemblies (supercomplex SCI(1)III(2)IV(1) and megacomplex MCI(2)III(2)IV(2)). Found in a complex with TMEM177, COA6, COX18, COX20, SCO1 and SCO2. Interacts with TMEM177 in a COX20-dependent manner. Interacts with COX20. Interacts with COX16. The cofactor is Cu cation.

The protein localises to the mitochondrion inner membrane. The catalysed reaction is 4 Fe(II)-[cytochrome c] + O2 + 8 H(+)(in) = 4 Fe(III)-[cytochrome c] + 2 H2O + 4 H(+)(out). In terms of biological role, component of the cytochrome c oxidase, the last enzyme in the mitochondrial electron transport chain which drives oxidative phosphorylation. The respiratory chain contains 3 multisubunit complexes succinate dehydrogenase (complex II, CII), ubiquinol-cytochrome c oxidoreductase (cytochrome b-c1 complex, complex III, CIII) and cytochrome c oxidase (complex IV, CIV), that cooperate to transfer electrons derived from NADH and succinate to molecular oxygen, creating an electrochemical gradient over the inner membrane that drives transmembrane transport and the ATP synthase. Cytochrome c oxidase is the component of the respiratory chain that catalyzes the reduction of oxygen to water. Electrons originating from reduced cytochrome c in the intermembrane space (IMS) are transferred via the dinuclear copper A center (CU(A)) of subunit 2 and heme A of subunit 1 to the active site in subunit 1, a binuclear center (BNC) formed by heme A3 and copper B (CU(B)). The BNC reduces molecular oxygen to 2 water molecules using 4 electrons from cytochrome c in the IMS and 4 protons from the mitochondrial matrix. This Formosania lacustris (Oriental stream loach) protein is Cytochrome c oxidase subunit 2 (mt-co2).